The chain runs to 69 residues: uncharacterized protein (69 aa).

This is an uncharacterized protein from Homo sapiens (Human).